Consider the following 379-residue polypeptide: Leukocyte elastase inhibitor A (379 aa).

Position 300 is a phosphoserine (S300).

Belongs to the serpin family. Ov-serpin subfamily. As to quaternary structure, monomer.

It localises to the secreted. The protein resides in the cytoplasm. The protein localises to the cytolytic granule. Its subcellular location is the early endosome. Its function is as follows. Regulates the activity of the neutrophil proteases. In Rattus norvegicus (Rat), this protein is Leukocyte elastase inhibitor A (Serpinb1a).